Here is a 92-residue protein sequence, read N- to C-terminus: Small ribosomal subunit protein uS19 (92 aa).

It belongs to the universal ribosomal protein uS19 family.

Functionally, protein S19 forms a complex with S13 that binds strongly to the 16S ribosomal RNA. In Corynebacterium diphtheriae (strain ATCC 700971 / NCTC 13129 / Biotype gravis), this protein is Small ribosomal subunit protein uS19.